A 491-amino-acid polypeptide reads, in one-letter code: Ketol-acid reductoisomerase (NADP(+)) (491 aa).

In terms of domain architecture, KARI N-terminal Rossmann spans 15-208; it reads AQLGKCRFMG…GGHRAGVLES (194 aa). NADP(+) is bound by residues 45-48, Arg-68, Arg-76, Ser-78, and 108-110; these read CGAQ and DKQ. The active site involves His-132. Residue Gly-158 participates in NADP(+) binding. KARI C-terminal knotted domains are found at residues 209–344 and 345–484; these read SFVA…TAPQ and YEGK…MTDM. Positions 217, 221, 389, and 393 each coordinate Mg(2+). Ser-414 lines the substrate pocket.

It belongs to the ketol-acid reductoisomerase family. Mg(2+) is required as a cofactor.

The enzyme catalyses (2R)-2,3-dihydroxy-3-methylbutanoate + NADP(+) = (2S)-2-acetolactate + NADPH + H(+). It catalyses the reaction (2R,3R)-2,3-dihydroxy-3-methylpentanoate + NADP(+) = (S)-2-ethyl-2-hydroxy-3-oxobutanoate + NADPH + H(+). It participates in amino-acid biosynthesis; L-isoleucine biosynthesis; L-isoleucine from 2-oxobutanoate: step 2/4. It functions in the pathway amino-acid biosynthesis; L-valine biosynthesis; L-valine from pyruvate: step 2/4. Its function is as follows. Involved in the biosynthesis of branched-chain amino acids (BCAA). Catalyzes an alkyl-migration followed by a ketol-acid reduction of (S)-2-acetolactate (S2AL) to yield (R)-2,3-dihydroxy-isovalerate. In the isomerase reaction, S2AL is rearranged via a Mg-dependent methyl migration to produce 3-hydroxy-3-methyl-2-ketobutyrate (HMKB). In the reductase reaction, this 2-ketoacid undergoes a metal-dependent reduction by NADPH to yield (R)-2,3-dihydroxy-isovalerate. The protein is Ketol-acid reductoisomerase (NADP(+)) of Shigella flexneri.